Here is a 341-residue protein sequence, read N- to C-terminus: Putative gustatory receptor 9a (341 aa).

A topological domain (cytoplasmic) is located at residue M1. Residues 2 to 22 form a helical membrane-spanning segment; that stretch reads SLWLEHFLTGYFQLCGLVCGW. Topologically, residues 23-30 are extracellular; it reads SGSRLGRL. Residues 31 to 51 form a helical membrane-spanning segment; it reads LSSTFLVLILIELVGEIETYF. Residues 52–68 lie on the Cytoplasmic side of the membrane; that stretch reads TEENPDNESVPAYFAKV. Residues 69–89 traverse the membrane as a helical segment; the sequence is IMGVNMAYKMIHAWIALSALF. Over 90 to 113 the chain is Extracellular; sequence ECRRFRYLLEELPPVKATSFIYRH. The helical transmembrane segment at 114–134 threads the bilayer; it reads LILEIILFACNAFLVLSEYTI. The Cytoplasmic segment spans residues 135 to 202; that stretch reads RGIYLENLRY…LAKVTRSLSH (68 aa). The chain crosses the membrane as a helical span at residues 203-223; sequence LFGLSLLLLNVLCLGDWIIVC. Topologically, residues 224-233 are extracellular; it reads NVYFMVAYLQ. Residues 234–254 traverse the membrane as a helical segment; the sequence is VLPATLFLFGQVMFVVCPTLI. Over 255-318 the chain is Cytoplasmic; it reads KIWSICAASH…GIYHLNLQTL (64 aa). Residues 319-339 traverse the membrane as a helical segment; the sequence is AGMFFFILEALVIFLQFVSLV. Topologically, residues 340 to 341 are extracellular; it reads RT.

The protein belongs to the insect chemoreceptor superfamily. Gustatory receptor (GR) family. Gr2a subfamily. As to expression, expressed in neurons of the terminal external chemosensory organ of larvae.

It is found in the cell membrane. In terms of biological role, probable gustatory receptor which mediates acceptance or avoidance behavior, depending on its substrates. In Drosophila melanogaster (Fruit fly), this protein is Putative gustatory receptor 9a (Gr9a).